The chain runs to 157 residues: Ubiquitin-like protein 4A (157 aa).

Residues 1–76 (MQLTVKALQG…LNLVVKPLEK (76 aa)) form the Ubiquitin-like domain. A Glycyl lysine isopeptide (Lys-Gly) (interchain with G-Cter in ubiquitin) cross-link involves residue lysine 48. At serine 90 the chain carries Phosphoserine. Positions 96–138 (WHLISKVLARHFSAADASRVLEQLQRDYERSLSRLTLDDIERL) are required and sufficient for interaction with BAG6.

Component of the BAG6/BAT3 complex, at least composed of BAG6, UBL4A and GET4/TRC35. Interacts with BAG6; the interaction is direct and required for UBL4A protein stability. Interacts with USP13; may be indirect via BAG6. Post-translationally, polyubiquitinated. Ubiquitination by AMFR and deubiquitination by USP13 may regulate the interaction between the BAG6/BAT3 complex and SGTA and therefore may regulate client proteins fate.

It localises to the cytoplasm. The protein resides in the cytosol. Its subcellular location is the nucleus. Functionally, as part of a cytosolic protein quality control complex, the BAG6/BAT3 complex, maintains misfolded and hydrophobic patches-containing proteins in a soluble state and participates in their proper delivery to the endoplasmic reticulum or alternatively can promote their sorting to the proteasome where they undergo degradation. The BAG6/BAT3 complex is involved in the post-translational delivery of tail-anchored/type II transmembrane proteins to the endoplasmic reticulum membrane. Recruited to ribosomes, it interacts with the transmembrane region of newly synthesized tail-anchored proteins and together with SGTA and ASNA1 mediates their delivery to the endoplasmic reticulum. Client proteins that cannot be properly delivered to the endoplasmic reticulum are ubiquitinated and sorted to the proteasome. Similarly, the BAG6/BAT3 complex also functions as a sorting platform for proteins of the secretory pathway that are mislocalized to the cytosol either delivering them to the proteasome for degradation or to the endoplasmic reticulum. The BAG6/BAT3 complex also plays a role in the endoplasmic reticulum-associated degradation (ERAD), a quality control mechanism that eliminates unwanted proteins of the endoplasmic reticulum through their retrotranslocation to the cytosol and their targeting to the proteasome. It maintains these retrotranslocated proteins in an unfolded yet soluble state condition in the cytosol to ensure their proper delivery to the proteasome. This is Ubiquitin-like protein 4A (UBL4A) from Oryctolagus cuniculus (Rabbit).